A 107-amino-acid polypeptide reads, in one-letter code: Phosphoribosyl-ATP pyrophosphatase (107 aa).

This sequence belongs to the PRA-PH family.

The protein resides in the cytoplasm. The catalysed reaction is 1-(5-phospho-beta-D-ribosyl)-ATP + H2O = 1-(5-phospho-beta-D-ribosyl)-5'-AMP + diphosphate + H(+). It functions in the pathway amino-acid biosynthesis; L-histidine biosynthesis; L-histidine from 5-phospho-alpha-D-ribose 1-diphosphate: step 2/9. This is Phosphoribosyl-ATP pyrophosphatase from Rhizobium johnstonii (strain DSM 114642 / LMG 32736 / 3841) (Rhizobium leguminosarum bv. viciae).